Here is a 570-residue protein sequence, read N- to C-terminus: MSVKIPRSVYADMFGPTTGDRVRLADTDLIIEVEKDFTIYGEEVKFGGGKVIRDGMGQSQVTNAQGAADTVITNALIVDHWGIVKADVALKDGYIAAIGKAGNPDIQPGVTIIIGPGTDIIAGEGKILTAGGFDSHIHFICPQQIEHALMSGVTSMLGGGTGPSHGTFATTCTPGPWHLGRMIQSFDAFPVNLGLAGKGNASQPAALKEMIEAGACALKLHEDWGTTPAAIDNCLTVADDYDVQVMIHSDTLNESGFVEDTIKAFKGRTIHAFHTEGAGGGHAPDIIKVAGLPNVLPSSTNPTRPFTKNTIDEHLDMLMVCHHLDPSIAEDLAFAESRIRKETIAAEDILHDLGALSMMSSDSQAMGRLGEVIIRTWQTADKMKKQRGSLPQDSARNDNFRVKRYIAKYTINPAIAHGVARLIGSIEQGKLADLVLWSPAFFGVKPDLIIKGGSIVAAPMGDPNASIPTPQPVHYQPMFAAYGRSLFASSVVFTSQAAVAEGLAKKLGIQKSLYGVENTRSGISKKSMIHNDATPNIEVDPETYEVRADGELLTCAPAEVLPMAQRYFMY.

The 440-residue stretch at 131–570 (GGFDSHIHFI…LPMAQRYFMY (440 aa)) folds into the Urease domain. Residues His136, His138, and Lys219 each coordinate Ni(2+). Lys219 is subject to N6-carboxylysine. His221 is a substrate binding site. Residues His248 and His274 each contribute to the Ni(2+) site. His322 acts as the Proton donor in catalysis. Residue Asp362 coordinates Ni(2+).

Belongs to the metallo-dependent hydrolases superfamily. Urease alpha subunit family. In terms of assembly, heterotrimer of UreA (gamma), UreB (beta) and UreC (alpha) subunits. Three heterotrimers associate to form the active enzyme. Ni cation is required as a cofactor. Carboxylation allows a single lysine to coordinate two nickel ions.

The protein localises to the cytoplasm. It catalyses the reaction urea + 2 H2O + H(+) = hydrogencarbonate + 2 NH4(+). It functions in the pathway nitrogen metabolism; urea degradation; CO(2) and NH(3) from urea (urease route): step 1/1. The chain is Urease subunit alpha from Rhodopseudomonas palustris (strain BisB18).